The following is an 88-amino-acid chain: Defensin-like protein 98 (88 aa).

Residues 1–29 (MGSLRVSTVVIAVVACLSILLISPTEVDG) form the signal peptide. Disulfide bonds link Cys33/Cys76, Cys40/Cys62, Cys46/Cys73, and Cys50/Cys75.

Belongs to the DEFL family.

The protein localises to the secreted. The sequence is that of Defensin-like protein 98 from Arabidopsis thaliana (Mouse-ear cress).